Consider the following 348-residue polypeptide: Putative zinc metalloprotease HP_0258 (348 aa).

H16 serves as a coordination point for Zn(2+). E17 is a catalytic residue. Residue H20 participates in Zn(2+) binding. Transmembrane regions (helical) follow at residues 43 to 63 (CFFK…GGYV), 93 to 113 (WILF…YFFL), 247 to 267 (LIMG…VGAL), 275 to 295 (MLLL…LLPI), and 324 to 344 (LWLA…FNDL). The region spanning 106-175 (AILVYFFLAL…GELVLEIERN (70 aa)) is the PDZ domain.

Belongs to the peptidase M50B family. Zn(2+) serves as cofactor.

It localises to the cell inner membrane. This Helicobacter pylori (strain ATCC 700392 / 26695) (Campylobacter pylori) protein is Putative zinc metalloprotease HP_0258.